The primary structure comprises 204 residues: CASP-like protein 2U1 (204 aa).

Over 1–36 (MGVLGGDAHVPIGSQVSPGSVVVTNNESFGHRKLLK) the chain is Cytoplasmic. A helical transmembrane segment spans residues 37 to 57 (GVDFLVRIKAFAFCLAVIVLL). Over 58–84 (KNNVQTTVIAPGIVLQAKYNNTKAPVS) the chain is Extracellular. N-linked (GlcNAc...) asparagine glycosylation is present at Asn-77. The helical transmembrane segment at 85–105 (LLVLASICCGYAFLQAVVSLL) threads the bilayer. The Cytoplasmic portion of the chain corresponds to 106 to 117 (SFIRDKRVLNNT). The helical transmembrane segment at 118–138 (VLAWLTFLLDQVLTYLLLGSA) threads the bilayer. Topologically, residues 139–170 (AATAEAAYIAKRGEDKVQWKAVCGPFKRFCDH) are extracellular. A helical membrane pass occupies residues 171-191 (FAATVFLSFIAVIAFAVSAAI). At 192–204 (SAYYLFRRSKGFK) the chain is on the cytoplasmic side.

This sequence belongs to the Casparian strip membrane proteins (CASP) family. In terms of assembly, homodimer and heterodimers.

The protein resides in the cell membrane. The polypeptide is CASP-like protein 2U1 (Selaginella moellendorffii (Spikemoss)).